Reading from the N-terminus, the 166-residue chain is Putative 4-hydroxy-4-methyl-2-oxoglutarate aldolase (166 aa).

Substrate is bound by residues 74–77 (GDQI) and Arg96. Asp97 contributes to the a divalent metal cation binding site.

It belongs to the class II aldolase/RraA-like family. Homotrimer. The cofactor is a divalent metal cation.

It catalyses the reaction 4-hydroxy-4-methyl-2-oxoglutarate = 2 pyruvate. It carries out the reaction oxaloacetate + H(+) = pyruvate + CO2. Its function is as follows. Catalyzes the aldol cleavage of 4-hydroxy-4-methyl-2-oxoglutarate (HMG) into 2 molecules of pyruvate. Also contains a secondary oxaloacetate (OAA) decarboxylase activity due to the common pyruvate enolate transition state formed following C-C bond cleavage in the retro-aldol and decarboxylation reactions. In Xanthomonas oryzae pv. oryzae (strain MAFF 311018), this protein is Putative 4-hydroxy-4-methyl-2-oxoglutarate aldolase.